The chain runs to 312 residues: Malate dehydrogenase (312 aa).

NAD(+) contacts are provided by residues 7-13 (GAAGGIG) and D34. Substrate contacts are provided by R81 and R87. NAD(+) contacts are provided by residues N94 and 117 to 119 (ITN). Substrate is bound by residues N119 and R153. H177 acts as the Proton acceptor in catalysis. Residue M227 participates in NAD(+) binding.

Belongs to the LDH/MDH superfamily. MDH type 1 family. Homodimer.

It catalyses the reaction (S)-malate + NAD(+) = oxaloacetate + NADH + H(+). Functionally, catalyzes the reversible oxidation of malate to oxaloacetate. This is Malate dehydrogenase from Pectobacterium carotovorum subsp. carotovorum (strain PC1).